The following is a 146-amino-acid chain: Lipoprotein signal peptidase (146 aa).

The next 3 helical transmembrane spans lie at 10–30 (GLFVLVFAIDQAIKALILGGF), 54–74 (FLEGWLKYIQLGMLGGILLFL), and 80–100 (FFVAHYLPLSILLAAGFSNIL). Catalysis depends on residues Asp110 and Asp127. A helical membrane pass occupies residues 118-138 (FEFAIFNFADVMIDVAVALFL).

This sequence belongs to the peptidase A8 family.

It is found in the cell inner membrane. It carries out the reaction Release of signal peptides from bacterial membrane prolipoproteins. Hydrolyzes -Xaa-Yaa-Zaa-|-(S,diacylglyceryl)Cys-, in which Xaa is hydrophobic (preferably Leu), and Yaa (Ala or Ser) and Zaa (Gly or Ala) have small, neutral side chains.. It functions in the pathway protein modification; lipoprotein biosynthesis (signal peptide cleavage). Functionally, this protein specifically catalyzes the removal of signal peptides from prolipoproteins. In Wolinella succinogenes (strain ATCC 29543 / DSM 1740 / CCUG 13145 / JCM 31913 / LMG 7466 / NCTC 11488 / FDC 602W) (Vibrio succinogenes), this protein is Lipoprotein signal peptidase.